The sequence spans 245 residues: Phycoerythrobilin:ferredoxin oxidoreductase (245 aa).

It belongs to the HY2 family.

The catalysed reaction is (3Z)-phycoerythrobilin + oxidized 2[4Fe-4S]-[ferredoxin] = 15,16-dihydrobiliverdin + reduced 2[4Fe-4S]-[ferredoxin] + 2 H(+). Catalyzes the two-electron reduction of the C2 and C3(1) diene system of 15,16-dihydrobiliverdin. In Gloeobacter violaceus (strain ATCC 29082 / PCC 7421), this protein is Phycoerythrobilin:ferredoxin oxidoreductase (pebB).